Consider the following 411-residue polypeptide: Proline-responsive transcriptional activator PutR (411 aa).

The protein belongs to the CdaR family.

In terms of biological role, activates transcription of the putBCP operon. Requires proline as a coactivator. The chain is Proline-responsive transcriptional activator PutR from Bacillus subtilis (strain 168).